The chain runs to 138 residues: MLHAKVVYDSSLHFLGFIGGIFAILGVIVLPITSGDTAFRAARLQIAEIFNVDQRSLPKRLLIAVPLFVLGYFISTIDFSVLWRYFTWANQMTAMVMLWTAAGYLYRYHKFHWVASLPAWFITTVCALICSTTKLVSA.

3 consecutive transmembrane segments (helical) span residues 12 to 32, 62 to 82, and 111 to 131; these read LHFL…VLPI, LIAV…FSVL, and FHWV…LICS.

Its subcellular location is the cell membrane. This is an uncharacterized protein from Haemophilus influenzae (strain ATCC 51907 / DSM 11121 / KW20 / Rd).